A 434-amino-acid polypeptide reads, in one-letter code: Isocitrate lyase (434 aa).

Substrate is bound at residue 91-93 (SGW). Aspartate 157 provides a ligand contact to Mg(2+). Catalysis depends on cysteine 195, which acts as the Proton acceptor. Residues 196–197 (GH), arginine 232, 317–321 (NCSPS), and threonine 351 each bind substrate.

The protein belongs to the isocitrate lyase/PEP mutase superfamily. Isocitrate lyase family. As to quaternary structure, homotetramer. The cofactor is Mg(2+).

The catalysed reaction is D-threo-isocitrate = glyoxylate + succinate. It functions in the pathway carbohydrate metabolism; glyoxylate cycle; (S)-malate from isocitrate: step 1/2. Functionally, involved in the metabolic adaptation in response to environmental changes. Catalyzes the reversible formation of succinate and glyoxylate from isocitrate, a key step of the glyoxylate cycle, which operates as an anaplerotic route for replenishing the tricarboxylic acid cycle during growth on fatty acid substrates. This is Isocitrate lyase (aceA) from Salmonella typhimurium (strain LT2 / SGSC1412 / ATCC 700720).